A 428-amino-acid polypeptide reads, in one-letter code: D-amino acid dehydrogenase (428 aa).

An FAD-binding site is contributed by 3-17; that stretch reads VVVLGSGVVGVTSAY.

Belongs to the DadA oxidoreductase family. FAD is required as a cofactor.

It carries out the reaction a D-alpha-amino acid + A + H2O = a 2-oxocarboxylate + AH2 + NH4(+). It functions in the pathway amino-acid degradation; D-alanine degradation; NH(3) and pyruvate from D-alanine: step 1/1. Its function is as follows. Oxidative deamination of D-amino acids. The protein is D-amino acid dehydrogenase of Paraburkholderia phymatum (strain DSM 17167 / CIP 108236 / LMG 21445 / STM815) (Burkholderia phymatum).